Reading from the N-terminus, the 96-residue chain is Myosuppressin (96 aa).

The N-terminal stretch at 1-24 is a signal peptide; it reads MALGNGYYCAVVCVVLACASVVLC. Residues 25–80 constitute a propeptide that is removed on maturation; sequence APAQLCAGAADDDPRAARFCQALNTFLELYAEAAGEQVPEYQALVRDYPQLLDTGM. Gln-83 carries the pyrrolidone carboxylic acid; partial modification. Phe-92 carries the post-translational modification Phenylalanine amide. Arg-96 is a propeptide.

Belongs to the myosuppressin family. As to expression, expressed in corpora cardiaca (CC), corpora allata (CA), antennal lobe (AL) and gnathal ganglion (GNG) (at protein level). In its non-pyroglutamate form, expression in GNG detected in all animals, in AL, CC and in CA in most animals (at protein level). In its pyroglutamate form, expression in CC, CA and GNG detected in all animals, in AL in some animals (at protein level).

It localises to the secreted. Its function is as follows. Myoinhibiting neuropeptide. This is Myosuppressin from Agrotis ipsilon (Black cutworm moth).